The chain runs to 792 residues: MEKRQLYSSQSQSQPLNIITNTINSRPSLLRKPASSSSQSNDRISYPPSTDSKFIQQQYHQPLLTNTDIKLEDIESSSSNNNPLKNSINNVSMQISQLNSSHHSRALLMQKRNNPTTNIRPTVKKKLDDTHKPLTSNFKKPITPISKLNTNMNNNNINNKNNNININSNNSSNSNNNILSPVQNNTISPNSNLLNSSIKFEKSNFFSTMYSSPTTITTTSTTLNNDNNNNISISSSCSNNSSFDLQQQHALHERMNKIDQFTQTVRGNLQSQFDNISEQLKPPRLSLSIQDIKTRLDFEEKNKEVEKIKLELKNVLQSLKEKEKELMEAHYKVSQVSVLKDNMERDLQQSNQMILDLQHEIRSSSLKAIQVDEKFNNMKDVTKDLDDEILRLNQLVRERDTEIESLRKENRELLEKSRSDEKVRRKLHNTIQELKGNIRVFCRIRPDFSSGQGANGSVFNIPAGTDNLVEVKSPTIDSFNGEASIKKSTFTFDRVFGPSSTQELVFEDISQLVQSSLDGYNTCIFTYGQTGSGKTHSILGDLKVPSQRGMIPRTVEKIFSSIQDLTEKGWTYQIECFFLEIYNETINDLLNTTTTTTGGNSKSNEIKYEIKHNPDTNVTTVTNMTVVPVTHPSQVYELLNLANKNRSVAKTLCNERSSRSHTVFQLKLIGYNQQSSERTQGLLNLIDLAGSERVSRSGVEGKQLKETQAINKSLSSLGDVISALANKEQHIPYRNSKLTFLLQNSIGGNSKTLMFVNISPELKDLQESTSSLRFAAKVNSCELGAARKQKII.

Disordered regions lie at residues 22 to 50 and 162 to 183; these read TINS…PPST and NNIN…SPVQ. The segment covering 34-50 has biased composition (polar residues); that stretch reads ASSSSQSNDRISYPPST. A coiled-coil region spans residues 284–423; it reads RLSLSIQDIK…LEKSRSDEKV (140 aa). Residues 437–781 form the Kinesin motor domain; that stretch reads NIRVFCRIRP…LRFAAKVNSC (345 aa). An ATP-binding site is contributed by 528–535; sequence GQTGSGKT.

It belongs to the TRAFAC class myosin-kinesin ATPase superfamily. Kinesin family. NCD subfamily.

Its subcellular location is the nucleus. The protein resides in the cytoplasm. It localises to the cytoskeleton. It is found in the spindle. Its function is as follows. Microtubule-dependent motor that is probably involved in microtubule organization in the mitotic spindle. This Dictyostelium discoideum (Social amoeba) protein is Kinesin-related protein 2 (kif2).